A 101-amino-acid polypeptide reads, in one-letter code: NAD(P)H-quinone oxidoreductase subunit 4L, chloroplastic (101 aa).

3 consecutive transmembrane segments (helical) span residues methionine 2–isoleucine 22, methionine 32–phenylalanine 52, and isoleucine 61–valine 81.

It belongs to the complex I subunit 4L family. As to quaternary structure, NDH is composed of at least 16 different subunits, 5 of which are encoded in the nucleus.

The protein resides in the plastid. Its subcellular location is the chloroplast thylakoid membrane. The enzyme catalyses a plastoquinone + NADH + (n+1) H(+)(in) = a plastoquinol + NAD(+) + n H(+)(out). The catalysed reaction is a plastoquinone + NADPH + (n+1) H(+)(in) = a plastoquinol + NADP(+) + n H(+)(out). In terms of biological role, NDH shuttles electrons from NAD(P)H:plastoquinone, via FMN and iron-sulfur (Fe-S) centers, to quinones in the photosynthetic chain and possibly in a chloroplast respiratory chain. The immediate electron acceptor for the enzyme in this species is believed to be plastoquinone. Couples the redox reaction to proton translocation, and thus conserves the redox energy in a proton gradient. The sequence is that of NAD(P)H-quinone oxidoreductase subunit 4L, chloroplastic from Populus alba (White poplar).